The chain runs to 146 residues: Cytochrome c-556 (146 aa).

An N-terminal signal peptide occupies residues 1–24 (MCMKLKTITAAMLFGCLCAGAVYA). The heme c site is built by methionine 35, cysteine 135, cysteine 138, and histidine 139.

Monomer. Binds 1 heme c group covalently per subunit.

Low-spin monoheme cytochrome c. In Agrobacterium fabrum (strain C58 / ATCC 33970) (Agrobacterium tumefaciens (strain C58)), this protein is Cytochrome c-556.